We begin with the raw amino-acid sequence, 200 residues long: Elongation factor Ts (200 aa).

Residues 82-85 (TDFV) are involved in Mg(2+) ion dislocation from EF-Tu.

The protein belongs to the EF-Ts family.

Its subcellular location is the cytoplasm. Functionally, associates with the EF-Tu.GDP complex and induces the exchange of GDP to GTP. It remains bound to the aminoacyl-tRNA.EF-Tu.GTP complex up to the GTP hydrolysis stage on the ribosome. This Solidesulfovibrio magneticus (strain ATCC 700980 / DSM 13731 / RS-1) (Desulfovibrio magneticus) protein is Elongation factor Ts.